We begin with the raw amino-acid sequence, 317 residues long: Probable porphobilinogen deaminase (317 aa).

Cys-234 bears the S-(dipyrrolylmethanemethyl)cysteine mark.

This sequence belongs to the HMBS family. Dipyrromethane serves as cofactor.

The enzyme catalyses 4 porphobilinogen + H2O = hydroxymethylbilane + 4 NH4(+). It functions in the pathway porphyrin-containing compound metabolism; protoporphyrin-IX biosynthesis; coproporphyrinogen-III from 5-aminolevulinate: step 2/4. In terms of biological role, tetrapolymerization of the monopyrrole PBG into the hydroxymethylbilane pre-uroporphyrinogen in several discrete steps. The protein is Probable porphobilinogen deaminase of Methanosarcina acetivorans (strain ATCC 35395 / DSM 2834 / JCM 12185 / C2A).